Here is a 103-residue protein sequence, read N- to C-terminus: Small ribosomal subunit protein uS10 (103 aa).

Belongs to the universal ribosomal protein uS10 family. Part of the 30S ribosomal subunit.

In terms of biological role, involved in the binding of tRNA to the ribosomes. The protein is Small ribosomal subunit protein uS10 of Sphingopyxis alaskensis (strain DSM 13593 / LMG 18877 / RB2256) (Sphingomonas alaskensis).